Here is a 433-residue protein sequence, read N- to C-terminus: uncharacterized protein (433 aa).

Residues 61 to 178 form the HD domain; that stretch reads RFNHSLGVYE…QIDADRMDYL (118 aa).

This is an uncharacterized protein from Bacillus subtilis (strain 168).